A 270-amino-acid polypeptide reads, in one-letter code: Diaminopimelate epimerase (270 aa).

Substrate contacts are provided by asparagine 15, glutamine 49, and asparagine 66. The active-site Proton donor is cysteine 75. Residues 76 to 77 (GN), asparagine 155, asparagine 187, and 204 to 205 (ER) each bind substrate. The Proton acceptor role is filled by cysteine 213. 214 to 215 (GS) is a substrate binding site.

Belongs to the diaminopimelate epimerase family. In terms of assembly, homodimer.

It is found in the cytoplasm. It catalyses the reaction (2S,6S)-2,6-diaminopimelate = meso-2,6-diaminopimelate. It functions in the pathway amino-acid biosynthesis; L-lysine biosynthesis via DAP pathway; DL-2,6-diaminopimelate from LL-2,6-diaminopimelate: step 1/1. In terms of biological role, catalyzes the stereoinversion of LL-2,6-diaminopimelate (L,L-DAP) to meso-diaminopimelate (meso-DAP), a precursor of L-lysine and an essential component of the bacterial peptidoglycan. The sequence is that of Diaminopimelate epimerase from Rickettsia felis (strain ATCC VR-1525 / URRWXCal2) (Rickettsia azadi).